A 330-amino-acid chain; its full sequence is Aspartate--ammonia ligase (330 aa).

It belongs to the class-II aminoacyl-tRNA synthetase family. AsnA subfamily.

The protein localises to the cytoplasm. The enzyme catalyses L-aspartate + NH4(+) + ATP = L-asparagine + AMP + diphosphate + H(+). It participates in amino-acid biosynthesis; L-asparagine biosynthesis; L-asparagine from L-aspartate (ammonia route): step 1/1. This chain is Aspartate--ammonia ligase, found in Streptococcus pyogenes serotype M6 (strain ATCC BAA-946 / MGAS10394).